Consider the following 421-residue polypeptide: Diaminobutyrate--2-oxoglutarate transaminase (421 aa).

Lysine 262 bears the N6-(pyridoxal phosphate)lysine mark.

The protein belongs to the class-III pyridoxal-phosphate-dependent aminotransferase family. Pyridoxal 5'-phosphate serves as cofactor.

The catalysed reaction is L-2,4-diaminobutanoate + 2-oxoglutarate = L-aspartate 4-semialdehyde + L-glutamate. Its pathway is amine and polyamine biosynthesis; ectoine biosynthesis; L-ectoine from L-aspartate 4-semialdehyde: step 1/3. Its function is as follows. Catalyzes reversively the conversion of L-aspartate beta-semialdehyde (ASA) to L-2,4-diaminobutyrate (DABA) by transamination with L-glutamate. This Vibrio parahaemolyticus serotype O3:K6 (strain RIMD 2210633) protein is Diaminobutyrate--2-oxoglutarate transaminase (ectB).